We begin with the raw amino-acid sequence, 891 residues long: MLPKKYDPNEIEPKWQKYWLEEKIYKYRLDENKPSYAIDTPPPFTSGTLHLGHVLSHTWIDIIARYKRMRGYNVLFPQGFDNHGLPTELKVEKEFGITKDQPEEFLKKCVEWTWQAIEAMRKQFIRIGYSADWDLEYHTMDDWYKAAVQKSLLEFYKKGLIYREEHPVYWCPKCRTSLAKAEVGYVEEEGYLYYIKLPLADGSGYIPIATTRPELMPACVAVFVHPDDERYKHLVGKKVKLPIYEREVPILADEDVDPNFGTGAVYNCTYGDEQDIVWQKRYNLPVIIAINEDGTMNENAGPYAGLKVEEARKKIAEDLEKMGLLYKKEKIKHRVLRHTERSSCMAPIELLPKKQWFIRVKDFTDEIVKVAKEINWYPEDMFLRLKDWAESMDWDWVISRQRVFGTPFPFWVCKNGHIIPAREEDLPVDPRFDKPPVEKCPVCGAEIEPVTDVLDCWVDSSITPLIITRWHEAIKGDEEAKKWFEHNFPTALRPQGTDIIRTWAFYTIFRTFKLTGKKPWKDIVINGMVAGPDGRKMSKSYGNVVAPDEVIPKYGADALRLWTALAPPGEDHPFKWETVDYNFRFLQKVWNIYRFAERHIKDFDYEKYKDIELEPLDRWILSRLHRIIKFATEELERYRFNLITRELMTFIWHEVADDYIEMVKYRLYGDDEESKLKAKVALYELLYNVMLLLAPFVPHITEEIYHAMFKDKIGEKSVHLLSWPEYREDRIDEKAEKLGELARKVVSEMRKYKNSHGMPLNAKLEHVAIYALESYDDLKLIEKDIAGTMNIEKLEIFKGEPQLEERIVEVKPNYKRIGPRYGKLVPRIVEHLKNNAESIAREIKENGKVEFEIDGEKVELTKEDVMIKKEVFSEGERVETAVVDDIVILFF.

A 'HIGH' region motif is present at residues 43–53 (PFTSGTLHLGH). The 'KMSKS' region signature appears at 536–540 (KMSKS). Lysine 539 lines the ATP pocket.

This sequence belongs to the class-I aminoacyl-tRNA synthetase family. ValS type 2 subfamily.

It localises to the cytoplasm. It catalyses the reaction tRNA(Val) + L-valine + ATP = L-valyl-tRNA(Val) + AMP + diphosphate. In terms of biological role, catalyzes the attachment of valine to tRNA(Val). As ValRS can inadvertently accommodate and process structurally similar amino acids such as threonine, to avoid such errors, it has a 'posttransfer' editing activity that hydrolyzes mischarged Thr-tRNA(Val) in a tRNA-dependent manner. This is Valine--tRNA ligase from Pyrococcus abyssi (strain GE5 / Orsay).